A 114-amino-acid polypeptide reads, in one-letter code: Protachykinin (114 aa).

Positions 1–19 (MKFLLPSIVIFLVLCQVFG) are cleaved as a signal peptide. Residues 20-55 (EELGPKEDLDYWTGSNQVQDEWLQADPFREIIRRMT) constitute a propeptide that is removed on maturation. Methionine amide is present on residues Met-67 and Met-91.

It belongs to the tachykinin family. In terms of tissue distribution, expressed in all parts of the brain, with robust expression in the olfactory bulbs and tracts, moderate expression in the hypothalamus and posterior brain, and weak expression in the telencephalon-preoptic region and optic tectum-thalamus. Also expressed in nerve fibers, intestine, testes and pituitary gland. Not expressed in the liver or kidneys.

It is found in the secreted. Functionally, tachykinins are active peptides which excite neurons, evoke behavioral responses, are potent vasodilators and secretagogues, and contract (directly or indirectly) many smooth muscles. Substance P produces a voltage-dependent inhibition of calcium current in retinal bipolar cells. It can enhance learning and memory, may regulate social approach and feeding behaviors, and can accelerate the functional recovery in postural balance in response to light after unilateral labyrinthectomy. The protein is Protachykinin of Carassius auratus (Goldfish).